A 212-amino-acid polypeptide reads, in one-letter code: ATP-dependent dethiobiotin synthetase BioD (212 aa).

An ATP-binding site is contributed by 13–18; that stretch reads GIGKTV. Thr-17 lines the Mg(2+) pocket. The active site involves Lys-33. Position 37 (Ser-37) interacts with substrate. Glu-100 contacts Mg(2+). ATP is bound by residues 100 to 103 and 184 to 186; these read EGAG and PRL.

The protein belongs to the dethiobiotin synthetase family. In terms of assembly, homodimer. Mg(2+) serves as cofactor.

Its subcellular location is the cytoplasm. It carries out the reaction (7R,8S)-7,8-diammoniononanoate + CO2 + ATP = (4R,5S)-dethiobiotin + ADP + phosphate + 3 H(+). Its pathway is cofactor biosynthesis; biotin biosynthesis; biotin from 7,8-diaminononanoate: step 1/2. Functionally, catalyzes a mechanistically unusual reaction, the ATP-dependent insertion of CO2 between the N7 and N8 nitrogen atoms of 7,8-diaminopelargonic acid (DAPA, also called 7,8-diammoniononanoate) to form a ureido ring. This chain is ATP-dependent dethiobiotin synthetase BioD, found in Agrobacterium fabrum (strain C58 / ATCC 33970) (Agrobacterium tumefaciens (strain C58)).